Reading from the N-terminus, the 156-residue chain is 2-C-methyl-D-erythritol 2,4-cyclodiphosphate synthase (156 aa).

2 residues coordinate a divalent metal cation: aspartate 10 and histidine 12. 4-CDP-2-C-methyl-D-erythritol 2-phosphate contacts are provided by residues 10–12 and 36–37; these read DSH and HS. Residue histidine 44 coordinates a divalent metal cation. Residues 58–60 and 63–67 each bind 4-CDP-2-C-methyl-D-erythritol 2-phosphate; these read DIG and FKDTD.

This sequence belongs to the IspF family. Homotrimer. A divalent metal cation serves as cofactor.

The enzyme catalyses 4-CDP-2-C-methyl-D-erythritol 2-phosphate = 2-C-methyl-D-erythritol 2,4-cyclic diphosphate + CMP. Its pathway is isoprenoid biosynthesis; isopentenyl diphosphate biosynthesis via DXP pathway; isopentenyl diphosphate from 1-deoxy-D-xylulose 5-phosphate: step 4/6. In terms of biological role, involved in the biosynthesis of isopentenyl diphosphate (IPP) and dimethylallyl diphosphate (DMAPP), two major building blocks of isoprenoid compounds. Catalyzes the conversion of 4-diphosphocytidyl-2-C-methyl-D-erythritol 2-phosphate (CDP-ME2P) to 2-C-methyl-D-erythritol 2,4-cyclodiphosphate (ME-CPP) with a corresponding release of cytidine 5-monophosphate (CMP). This chain is 2-C-methyl-D-erythritol 2,4-cyclodiphosphate synthase, found in Aquifex aeolicus (strain VF5).